Consider the following 205-residue polypeptide: Cytochrome c oxidase subunit 3 (205 aa).

The next 5 membrane-spanning stretches (helical) occupy residues 29 to 49 (TIVF…MYFV), 72 to 92 (ALLI…GVFA), 104 to 124 (WFLV…YEYI), 142 to 162 (FFIT…AFVV), and 184 to 204 (SYYW…IYFI).

As to quaternary structure, associates with subunits I, II and IV to form cytochrome c oxidase. The 4 subunit cytochrome c oxidase forms a supercomplex with the menaquinol-cytochrome c reductase complex (cytochrome bc1).

The protein localises to the cell membrane. The enzyme catalyses 4 Fe(II)-[cytochrome c] + O2 + 8 H(+)(in) = 4 Fe(III)-[cytochrome c] + 2 H2O + 4 H(+)(out). The polypeptide is Cytochrome c oxidase subunit 3 (ctaE) (Corynebacterium glutamicum (strain ATCC 13032 / DSM 20300 / JCM 1318 / BCRC 11384 / CCUG 27702 / LMG 3730 / NBRC 12168 / NCIMB 10025 / NRRL B-2784 / 534)).